The sequence spans 1405 residues: Rho guanine nucleotide exchange factor 18 (1405 aa).

Disordered stretches follow at residues 1–47, 92–115, and 289–330; these read MGSE…EDGF, ETHRQEARRESSHTSCEGASALPQ, and PGKS…PGKR. Composition is skewed to basic and acidic residues over residues 92–103 and 308–330; these read ETHRQEARRESS and RQKEKGKSPAHLKDKTQDLPGKR. The C2H2-type; degenerate zinc finger occupies 347–372; it reads SSCPLCGEPLLNSASLKEHPRTTLLS. The DH domain maps to 485–682; the sequence is KRQDVLYELM…KDIISQVDAK (198 aa). Residues 723 to 825 enclose the PH domain; sequence QLHLEGALCW…WMAHIRRAVE (103 aa). A disordered region spans residues 936–1016; that stretch reads QVEEGSVSAG…PQAVEMPSTE (81 aa). Threonine 952 carries the post-translational modification Phosphothreonine. Residue serine 961 is modified to Phosphoserine. Residues 1084 to 1181 are a coiled coil; sequence FEKQREERAG…RERLELLRRF (98 aa). Disordered stretches follow at residues 1198–1242, 1274–1309, and 1328–1405; these read EAQP…VERP, RQTAVQQQIPTKLAASTKGGKEKGSKSRGSQRWESS, and ESAS…VIFF. Phosphoserine occurs at positions 1336 and 1338. Residues 1355–1365 show a composition bias toward pro residues; it reads FPAPSPAPAAT. Over residues 1375-1394 the composition is skewed to low complexity; the sequence is TSLPPVSPASSLPTTPLATT. Basic and acidic residues predominate over residues 1396-1405; sequence EVSKEDVIFF.

Interacts with SEPT9; interaction may inhibit GEF activity. Interacts with Gbetagamma subunits GNB1 and GNG2. Interacts with EPB41L4B. Interacts with PATJ (via C-terminus).

The protein localises to the cytoplasm. The protein resides in the cytoskeleton. Its subcellular location is the cell membrane. It localises to the apical cell membrane. Acts as a guanine nucleotide exchange factor (GEF) for RhoA GTPases. May play a role in actin cytoskeleton reorganization in different tissues since its activation induces formation of actin stress fibers. Also acts as a GEF for RAC1, inducing production of reactive oxygen species (ROS). Does not act as a GEF for CDC42. The G protein beta-gamma (Gbetagamma) subunits of heterotrimeric G proteins act as activators, explaining the integrated effects of LPA and other G-protein coupled receptor agonists on actin stress fiber formation, cell shape change and ROS production. Required for EPB41L4B-mediated regulation of the circumferential actomyosin belt in epithelial cells. The sequence is that of Rho guanine nucleotide exchange factor 18 (Arhgef18) from Mus musculus (Mouse).